Here is a 261-residue protein sequence, read N- to C-terminus: MQPLLLLLTFILLQGDEAGKIIGGREARPHSYPYMAFLLIQSPEGLSACGGFLVREDFVLTAAHCLGSSINVTLGAHNIQMRERTQQLITVLRAIRHPDYNPQNIRNDIMLLQLRRRARRSGSVKPVALPQASKKLQPGDLCTVAGWGRVSQSRGTNVLQEVQLRVQMDQMCANRFQFYNSQTQICVGNPRERKSAFRGDSGGPLVCSNVAQGIVSYGSNNGNPPAVFTKIQSFMPWIKRTMRRFAPRYQRPANSLSQAQT.

The signal sequence occupies residues 1 to 18; that stretch reads MQPLLLLLTFILLQGDEA. A propeptide spans 19 to 20 (activation peptide); the sequence is GK. Residues 21–25 form an important for antimicrobial activity region; sequence IIGGR. The 223-residue stretch at 21 to 243 folds into the Peptidase S1 domain; sequence IIGGREARPH…FMPWIKRTMR (223 aa). C49 and C65 are joined by a disulfide. H64 functions as the Charge relay system in the catalytic mechanism. An N-linked (GlcNAc...) asparagine glycan is attached at N71. Residues 97–111 are important for antimicrobial activity; the sequence is HPDYNPQNIRNDIML. The active-site Charge relay system is D108. Cystine bridges form between C142–C207 and C172–C186. The Charge relay system role is filled by S201.

Belongs to the peptidase S1 family. In adult, detected only in bone marrow where expression is restricted to a small population of early myeloid cells.

The protein localises to the cell membrane. Its subcellular location is the cytoplasmic granule. It localises to the secreted. The protein resides in the cytoplasm. It is found in the cytosol. The protein localises to the lysosome. Its subcellular location is the nucleus. It catalyses the reaction Specificity similar to chymotrypsin C.. Inhibited by chymostatin, phenylmethanesulfonyl fluoride and diisopropyl fluorophosphate. Functionally, serine protease with trypsin- and chymotrypsin-like specificity. Also displays antibacterial activity against Gram-negative and Gram-positive bacteria independent of its protease activity. Prefers Phe and Tyr residues in the P1 position of substrates but also cleaves efficiently after Trp and Leu. Shows a preference for negatively charged amino acids in the P2' position and for aliphatic amino acids both upstream and downstream of the cleavage site. Required for recruitment and activation of platelets which is mediated by the F2RL3/PAR4 platelet receptor. Binds reversibly to and stimulates B cells and CD4(+) and CD8(+) T cells. Also binds reversibly to natural killer (NK) cells and enhances NK cell cytotoxicity through its protease activity. Cleaves complement C3. Cleaves vimentin. Cleaves thrombin receptor F2R/PAR1. Cleaves the synovial mucin-type protein PRG4/lubricin. Cleaves and activates IL36G which promotes expression of chemokines CXCL1 and CXLC8 in keratinocytes. Cleaves IL33 into mature forms which have greater activity than the unprocessed form. Cleaves coagulation factor F8 to produce a partially activated form. Also cleaves and activates coagulation factor F10. Cleaves leukocyte cell surface protein SPN/CD43 to release its extracellular domain and trigger its intramembrane proteolysis by gamma-secretase, releasing the CD43 cytoplasmic tail chain (CD43-ct) which translocates to the nucleus. During apoptosis, cleaves SMARCA2/BRM to produce a 160 kDa cleavage product which localizes to the cytosol. Cleaves MBP in B cell lysosomes at '221-Phe-|-Lys-222', degrading the major immunogenic MBP epitope and preventing the activation of MBP-specific autoreactive T cells. Cleaves annexin ANXA1 and antimicrobial peptide CAMP to produce peptides which act on neutrophil N-formyl peptide receptors to enhance the release of CXCL2. Acts as a ligand for the N-formyl peptide receptor FPR1, enhancing phagocyte chemotaxis. Has antibacterial activity against the Gram-negative bacteria N.gonorrhoeae and P.aeruginosa. Likely to act against N.gonorrhoeae by interacting with N.gonorrhoeae penA/PBP2. Exhibits potent antimicrobial activity against the Gram-positive bacterium L.monocytogenes. Has antibacterial activity against the Gram-positive bacterium S.aureus and degrades S.aureus biofilms, allowing polymorphonuclear leukocytes to penetrate the biofilm and phagocytose bacteria. Has antibacterial activity against M.tuberculosis. Induces platelet aggregation which is strongly potentiated in the presence of ELANE. The chain is Cathepsin G (Ctsg) from Mus musculus (Mouse).